Reading from the N-terminus, the 856-residue chain is Dual specificity protein kinase TTK (856 aa).

Met-1 is modified (N-acetylmethionine). Thr-32 carries the phosphothreonine modification. Phosphoserine is present on residues Ser-36, Ser-277, and Ser-342. At Thr-380 the chain carries Phosphothreonine. Phosphoserine is present on residues Ser-383, Ser-435, and Ser-454. A Protein kinase domain is found at 524 to 790 (YSILKQIGSG…IPELLTHPYV (267 aa)). ATP contacts are provided by residues 530-538 (IGSGGSSKV) and Lys-552. Asp-646 functions as the Proton acceptor in the catalytic mechanism. The residue at position 820 (Ser-820) is a Phosphoserine. The segment at 837–856 (CGEGQDSSSSKTFDKKRERK) is disordered.

Belongs to the protein kinase superfamily. Ser/Thr protein kinase family. Interacts with TPR; the interactions occurs in a microtubule-independent manner. Interacts with MAD1L1 and MAD2L1. Autophosphorylated. In terms of tissue distribution, present in rapidly proliferating cell lines; high levels in testis, bone marrow, spleen and thymus. Low levels in brain, heart, lung and kidney.

The catalysed reaction is L-seryl-[protein] + ATP = O-phospho-L-seryl-[protein] + ADP + H(+). It carries out the reaction L-threonyl-[protein] + ATP = O-phospho-L-threonyl-[protein] + ADP + H(+). The enzyme catalyses L-tyrosyl-[protein] + ATP = O-phospho-L-tyrosyl-[protein] + ADP + H(+). Inhibited by the ATP-competitive kinase inhibitor, SP600125. Involved in mitotic spindle assembly checkpoint signaling, a process that delays anaphase until chromosomes are bioriented on the spindle, and in the repair of incorrect mitotic kinetochore-spindle microtubule attachments. Phosphorylates MAD1L1 to promote the mitotic spindle assembly checkpoint. Phosphorylates CDCA8/Borealin leading to enhanced AURKB activity at the kinetochore. Phosphorylates SKA3 at 'Ser-34' leading to dissociation of the SKA complex from microtubules and destabilization of microtubule-kinetochore attachments. Phosphorylates KNL1, KNTC1 and autophosphorylates. Phosphorylates MCRS1 which enhances recruitment of KIF2A to the minus end of spindle microtubules and promotes chromosome alignment. In Mus musculus (Mouse), this protein is Dual specificity protein kinase TTK (Ttk).